Here is a 1675-residue protein sequence, read N- to C-terminus: Clathrin heavy chain 1 (1675 aa).

An N-acetylalanine modification is found at Ala-2. Positions 2 to 479 (AQILPIRFQE…VDPTLALSVY (478 aa)) are globular terminal domain. WD40-like repeat regions lie at residues 24–67 (NIGF…RPIS), 68–107 (ADSA…MTDD), 108–149 (VTFW…SSLA), 150–195 (GCQI…QPIE), 196–257 (GHAA…PEAQ), 258–301 (NDFP…ISGE), and 302–330 (TIFV…VCVE). Position 67 is a phosphoserine (Ser-67). Thr-105 is modified (phosphothreonine). At Tyr-184 the chain carries Phosphotyrosine. Residue Thr-394 is modified to Phosphothreonine. Residues 449–465 (EKWLKEDKLECSEELGD) are binding site for the uncoating ATPase, involved in lattice disassembly. The interval 480–523 (LRANVPNKVIQCFAETGQVQKIVLYAKKVGYTPDWIFLLRNVMR) is flexible linker. Residues 524-634 (ISPDQGQQFA…RALEHFTDLY (111 aa)) are distal segment. The heavy chain arm stretch occupies residues 524–1675 (ISPDQGQQFA…QPQPGFGYSM (1152 aa)). 7 CHCR repeats span residues 537-683 (VQDE…QIWV), 686-828 (ASKY…SEDV), 833-972 (ILVV…PLID), 979-1124 (LSET…VKEA), 1128-1269 (YIKA…FRLA), 1274-1420 (LHIV…LLLN), and 1423-1566 (LMVL…RECF). Tyr-634 carries the phosphotyrosine modification. Residues 639-1675 (AVVHTHLLNP…QPQPGFGYSM (1037 aa)) are proximal segment. An N6-succinyllysine modification is found at Lys-737. Lys-856 is modified (N6-acetyllysine). Tyr-899 bears the Phosphotyrosine mark. A Phosphoserine modification is found at Ser-1167. Residue Tyr-1206 is modified to Phosphotyrosine. Residues 1213–1522 (AAKLLYNNVS…YLFKGNNRWK (310 aa)) form an involved in binding clathrin light chain region. Ser-1229 carries the post-translational modification Phosphoserine. Lys-1441 bears the N6-acetyllysine; alternate mark. Lys-1441 is subject to N6-succinyllysine; alternate. Phosphotyrosine occurs at positions 1477 and 1487. Ser-1494 is subject to Phosphoserine. The residue at position 1501 (Lys-1501) is an N6-acetyllysine. A trimerization region spans residues 1550-1675 (AEELLQWFLQ…QPQPGFGYSM (126 aa)).

It belongs to the clathrin heavy chain family. As to quaternary structure, clathrin triskelions, composed of 3 heavy chains and 3 light chains, are the basic subunits of the clathrin coat. In the presence of light chains, hub assembly is influenced by both the pH and the concentration of calcium. Interacts with HIP1. Interacts with DENND1A, DENND1B and DENND1C. Interacts with OCRL. Interacts with ERBB2. Interacts with FKBP6. Interacts with CKAP5 and TACC3 forming the TACC3/ch-TOG/clathrin complex located at spindle inter-microtubules bridges; the complex implicates clathrin triskelions; TACC3 and CLTC are proposed to form a composite microtubule interaction surface. Interacts with ATG16L1 (via N-terminus). Interacts with RFTN1; the interaction occurs in response to pathogens. Interacts with USP2 isoform 2. Interacts with TMEM106B (via N-terminus). Interacts with DNAJC6; this interaction produces a local change in heavy-chain contacts, creating a detectable global distortion of the clathrin coat and leads to the recruitment of HSPA8.

It localises to the cytoplasmic vesicle membrane. Its subcellular location is the membrane. The protein localises to the coated pit. It is found in the melanosome. The protein resides in the cytoplasm. It localises to the cytoskeleton. Its subcellular location is the spindle. Functionally, clathrin is the major protein of the polyhedral coat of coated pits and vesicles. Two different adapter protein complexes link the clathrin lattice either to the plasma membrane or to the trans-Golgi network. Acts as a component of the TACC3/ch-TOG/clathrin complex proposed to contribute to stabilization of kinetochore fibers of the mitotic spindle by acting as inter-microtubule bridge. The TACC3/ch-TOG/clathrin complex is required for the maintenance of kinetochore fiber tension. Plays a role in early autophagosome formation. Interaction with DNAJC6 mediates the recruitment of HSPA8 to the clathrin lattice and creates local destabilization of the lattice promoting uncoating. This Rattus norvegicus (Rat) protein is Clathrin heavy chain 1.